A 277-amino-acid polypeptide reads, in one-letter code: Pantothenate synthetase (277 aa).

26–33 (MGNLHEGH) contacts ATP. Histidine 33 acts as the Proton donor in catalysis. Glutamine 57 lines the (R)-pantoate pocket. Glutamine 57 is a binding site for beta-alanine. ATP is bound at residue 144 to 147 (GKKD). Glutamine 150 serves as a coordination point for (R)-pantoate. ATP contacts are provided by residues glycine 173 and 181–184 (LSSR).

It belongs to the pantothenate synthetase family. As to quaternary structure, homodimer.

It is found in the cytoplasm. The enzyme catalyses (R)-pantoate + beta-alanine + ATP = (R)-pantothenate + AMP + diphosphate + H(+). It functions in the pathway cofactor biosynthesis; (R)-pantothenate biosynthesis; (R)-pantothenate from (R)-pantoate and beta-alanine: step 1/1. Functionally, catalyzes the condensation of pantoate with beta-alanine in an ATP-dependent reaction via a pantoyl-adenylate intermediate. This chain is Pantothenate synthetase, found in Laribacter hongkongensis (strain HLHK9).